A 709-amino-acid chain; its full sequence is Polyribonucleotide nucleotidyltransferase (709 aa).

Mg(2+) contacts are provided by aspartate 486 and aspartate 492. The region spanning 553 to 612 (PRIHTIKINPDKIKDVIGKGGSVIRALTEETGTTIEIEDDGTVKIAATDGEKAKHAISRI) is the KH domain. Positions 622-690 (GRIYAGKVTR…RQGRVRLSIK (69 aa)) constitute an S1 motif domain.

This sequence belongs to the polyribonucleotide nucleotidyltransferase family. As to quaternary structure, component of the RNA degradosome, which is a multiprotein complex involved in RNA processing and mRNA degradation. Mg(2+) serves as cofactor.

It is found in the cytoplasm. The enzyme catalyses RNA(n+1) + phosphate = RNA(n) + a ribonucleoside 5'-diphosphate. Functionally, involved in mRNA degradation. Catalyzes the phosphorolysis of single-stranded polyribonucleotides processively in the 3'- to 5'-direction. The protein is Polyribonucleotide nucleotidyltransferase of Photorhabdus luminescens (Xenorhabdus luminescens).